A 192-amino-acid chain; its full sequence is INO80 complex subunit C (192 aa).

A disordered region spans residues 1–44; that stretch reads MAAQIPIVATTSTPGIVRNSKKRPASPSHNGSSGGGYGASKKKK.

As to quaternary structure, component of the chromatin remodeling INO80 complex; specifically part of a complex module associated with the helicase ATP-binding and the helicase C-terminal domain of INO80. Component of some MLL1/MLL complex, at least composed of the core components KMT2A/MLL1, ASH2L, HCFC1/HCF1, WDR5 and RBBP5, as well as the facultative components BACC1, CHD8, E2F6, HSP70, INO80C, KANSL1, LAS1L, MAX, MCRS1, MGA, MYST1/MOF, PELP1, PHF20, PRP31, RING2, RUVB1/TIP49A, RUVB2/TIP49B, SENP3, TAF1, TAF4, TAF6, TAF7, TAF9 and TEX10.

Its subcellular location is the nucleus. Functionally, proposed core component of the chromatin remodeling INO80 complex which is involved in transcriptional regulation, DNA replication and probably DNA repair. The sequence is that of INO80 complex subunit C (INO80C) from Homo sapiens (Human).